We begin with the raw amino-acid sequence, 530 residues long: MATPSSIPAEPKRDVVNRIHRVTRGNRSLWYQMTVLQQPERARACGSGSKANSDRRPVDPPPVVELRIIEGPSVEEGKDITFDYNANFFLYASLEHARPLARGRVNTPAAGNPPILTGVPASGMAYLDRPTEAGYFIFPDLSVRHEGLYILTFSLFETTKEERDFDLEPADGDLPPGVDYRMEIKTDPFSVYSAKKFPGLMESTQLSKTVADQGCQVRIRRDVRMRKRESKPGAGNSNSGGNGFERREEDFGRRRTITPASEDPHSIRNRSHSNSSEQRTPYTDASRRPSMVDSYPPPPPPPSYEPAPSASRHLDFGDSSAAQYPTPRQYAHQPGLQITPGPPSGSYAPTAQSPYSKTDAPYGYVNRNIPPSCPSPAPSVKHDLYDRRQSTSSYVPPSPSVYSTEGHHRRDSRPSYPPTPVAAPRPRPMHSQTSLPALKIDQLVSPVSPLPPIEPQTGPAPELPPINVGGKRKHESVFAQSTRPLHNGQRQVDPHYGRSHRGYSPDHDQGWYSRADGQISSVQFNRYYDE.

The 195-residue stretch at 26 to 220 (NRSLWYQMTV…ADQGCQVRIR (195 aa)) folds into the Velvet domain. A Nuclear localization signal motif is present at residues 40-45 (ERARAC). The interval 206 to 516 (LSKTVADQGC…HDQGWYSRAD (311 aa)) is disordered. Residues 244-253 (FERREEDFGR) show a composition bias toward basic and acidic residues. Positions 295 to 305 (YPPPPPPPSYE) are enriched in pro residues. Residues 347-356 (YAPTAQSPYS) show a composition bias toward polar residues. Basic and acidic residues predominate over residues 380–389 (VKHDLYDRRQ). The segment covering 390-404 (STSSYVPPSPSVYST) has biased composition (low complexity). Positions 415–426 (SYPPTPVAAPRP) are enriched in pro residues. The segment at 429–460 (MHSQTSLPALKIDQLVSPVSPLPPIEPQTGPA) is PEST. Residues 478–490 (FAQSTRPLHNGQR) show a composition bias toward polar residues.

Belongs to the velvet family. VeA subfamily. In terms of assembly, component of the heterotrimeric velvet complex composed of LAE1, VEL1 and VEL2; VEL1 acting as a bridging protein between LAE1 and VEL2. Interacts with LAE1.

Its subcellular location is the nucleus. It localises to the cytoplasm. In terms of biological role, component of the velvet transcription factor complex that controls sexual/asexual developmental ratio in response to light, promoting sexual development in the darkness while stimulating asexual sporulation under illumination. The velvet complex hat acts as a global regulator for secondary metabolite gene expression. Controls positively the expression of the gibberellins, fumonisins and fusarin C gene clusters. Controls the expression of the fusaric acid gene cluster. Controls negatively the expression of the bikaverin gene cluster. Regulates the expression of laeA. Plays a crucial role in virulence. The chain is Developmental and secondary metabolism regulator VEL1 from Gibberella fujikuroi (strain CBS 195.34 / IMI 58289 / NRRL A-6831) (Bakanae and foot rot disease fungus).